The primary structure comprises 344 residues: rRNA 2'-O-methyltransferase fibrillarin (344 aa).

The segment at 1–113 (MGKPGFSPRG…GFKGGKTVTI (113 aa)) is disordered. A compositionally biased stretch (gly residues) spans 8–107 (PRGGGGGGGG…RGGGAGGFKG (100 aa)). An asymmetric dimethylarginine mark is found at arginine 9, arginine 23, arginine 25, arginine 40, arginine 42, arginine 48, arginine 51, arginine 58, arginine 63, arginine 71, arginine 77, arginine 83, arginine 88, arginine 93, and arginine 98. Residues 197-198 (TT), 216-217 (EF), 241-242 (DA), and 261-264 (DVAQ) each bind S-adenosyl-L-methionine.

Belongs to the methyltransferase superfamily. Fibrillarin family. Component of box C/D small nucleolar ribonucleoprotein (snoRNP) particles. It is associated with the U3, U8 and U13 small nuclear RNAs. By homology to other fibrillarins, some or all of the N-terminal domain arginines are modified to asymmetric dimethylarginine (DMA).

It is found in the nucleus. The protein resides in the nucleolus. It carries out the reaction L-glutaminyl-[histone H2A] + S-adenosyl-L-methionine = N(5)-methyl-L-glutaminyl-[histone H2A] + S-adenosyl-L-homocysteine + H(+). S-adenosyl-L-methionine-dependent methyltransferase that has the ability to methylate both RNAs and proteins. Involved in pre-rRNA processing. Utilizes the methyl donor S-adenosyl-L-methionine to catalyze the site-specific 2'-hydroxyl methylation of ribose moieties in pre-ribosomal RNA. Site specificity is provided by a guide RNA that base pairs with the substrate. Methylation occurs at a characteristic distance from the sequence involved in base pairing with the guide RNA. Also acts as a protein methyltransferase by mediating methylation of 'Gln-105' of histone H2A (H2AQ105me), a modification that impairs binding of the FACT complex and is specifically present at 35S ribosomal DNA locus. The sequence is that of rRNA 2'-O-methyltransferase fibrillarin from Drosophila melanogaster (Fruit fly).